Here is a 558-residue protein sequence, read N- to C-terminus: UvrABC system protein C (558 aa).

The GIY-YIG domain occupies 12-92 (LLPGVYIFYG…IFNHKPKYNV (81 aa)). A UVR domain is found at 200–235 (SETLDLIEEKMKKHAKMMDFENAAKYRDLLVKFENV).

This sequence belongs to the UvrC family. As to quaternary structure, interacts with UvrB in an incision complex.

It localises to the cytoplasm. In terms of biological role, the UvrABC repair system catalyzes the recognition and processing of DNA lesions. UvrC both incises the 5' and 3' sides of the lesion. The N-terminal half is responsible for the 3' incision and the C-terminal half is responsible for the 5' incision. In Pseudothermotoga lettingae (strain ATCC BAA-301 / DSM 14385 / NBRC 107922 / TMO) (Thermotoga lettingae), this protein is UvrABC system protein C.